We begin with the raw amino-acid sequence, 397 residues long: Elongation factor Tu (397 aa).

Residues 10-207 form the tr-type G domain; that stretch reads KPHVNVGTVG…AIDAYVPDPV (198 aa). Residues 19–26 are G1; sequence GHIDHGKT. A GTP-binding site is contributed by 19–26; that stretch reads GHIDHGKT. Mg(2+) is bound at residue threonine 26. The interval 60–64 is G2; sequence GITIA. A G3 region spans residues 81–84; the sequence is DCPG. GTP-binding positions include 81–85 and 136–139; these read DCPGH and NKVD. The G4 stretch occupies residues 136 to 139; sequence NKVD. A G5 region spans residues 174 to 176; the sequence is SAL.

This sequence belongs to the TRAFAC class translation factor GTPase superfamily. Classic translation factor GTPase family. EF-Tu/EF-1A subfamily. Monomer.

It localises to the cytoplasm. It carries out the reaction GTP + H2O = GDP + phosphate + H(+). Its function is as follows. GTP hydrolase that promotes the GTP-dependent binding of aminoacyl-tRNA to the A-site of ribosomes during protein biosynthesis. The polypeptide is Elongation factor Tu (Syntrophobacter fumaroxidans (strain DSM 10017 / MPOB)).